Reading from the N-terminus, the 130-residue chain is Ribosome-binding factor A (130 aa).

The tract at residues arginine 111–arginine 130 is disordered.

This sequence belongs to the RbfA family. As to quaternary structure, monomer. Binds 30S ribosomal subunits, but not 50S ribosomal subunits or 70S ribosomes.

It localises to the cytoplasm. Its function is as follows. One of several proteins that assist in the late maturation steps of the functional core of the 30S ribosomal subunit. Associates with free 30S ribosomal subunits (but not with 30S subunits that are part of 70S ribosomes or polysomes). Required for efficient processing of 16S rRNA. May interact with the 5'-terminal helix region of 16S rRNA. This chain is Ribosome-binding factor A, found in Xanthomonas euvesicatoria pv. vesicatoria (strain 85-10) (Xanthomonas campestris pv. vesicatoria).